Here is an 808-residue protein sequence, read N- to C-terminus: Phenylalanine--tRNA ligase beta subunit (808 aa).

A tRNA-binding domain is found at 40 to 149 (RPELDFVKIV…DQAEVGKTIR (110 aa)). Positions 407 to 484 (HKEVRIHTDI…RTKGYDTIQV (78 aa)) constitute a B5 domain. Mg(2+) contacts are provided by aspartate 462, aspartate 468, glutamate 471, and glutamate 472. In terms of domain architecture, FDX-ACB spans 716–808 (SQFPEAEIDL…LAGKNGFVLR (93 aa)).

This sequence belongs to the phenylalanyl-tRNA synthetase beta subunit family. Type 1 subfamily. As to quaternary structure, tetramer of two alpha and two beta subunits. Mg(2+) serves as cofactor.

It localises to the cytoplasm. The catalysed reaction is tRNA(Phe) + L-phenylalanine + ATP = L-phenylalanyl-tRNA(Phe) + AMP + diphosphate + H(+). This Leptospira interrogans serogroup Icterohaemorrhagiae serovar copenhageni (strain Fiocruz L1-130) protein is Phenylalanine--tRNA ligase beta subunit.